Consider the following 244-residue polypeptide: MAKTYTPEEAEALVHSHDPEHPANLICDLCREFYKLGWVTGTGGGISIRKDDVVYLAPSGVQKERIKPEHIFVLPFAQSSVPKPGSKRDFIRIPSKKGLNESQCTPLFWNAFTMREAGACIHTHSQHAVLLTLLLPRDAPSFRISHQEMIKGVRLGGVGKTLKFFETLEVPIIDNTAFEEDLTEGMAAAMARYPDAPAILVRRHGVYVWGNTWEQAKTQAECLDYLFEIACKMIQNKIPLEGDT.

Cys-104 contacts substrate. 2 residues coordinate Zn(2+): His-122 and His-124. Glu-148 (proton donor/acceptor) is an active-site residue. His-204 is a Zn(2+) binding site.

Belongs to the aldolase class II family. MtnB subfamily. Zn(2+) is required as a cofactor.

The protein localises to the cytoplasm. The enzyme catalyses 5-(methylsulfanyl)-D-ribulose 1-phosphate = 5-methylsulfanyl-2,3-dioxopentyl phosphate + H2O. The protein operates within amino-acid biosynthesis; L-methionine biosynthesis via salvage pathway; L-methionine from S-methyl-5-thio-alpha-D-ribose 1-phosphate: step 2/6. In terms of biological role, catalyzes the dehydration of methylthioribulose-1-phosphate (MTRu-1-P) into 2,3-diketo-5-methylthiopentyl-1-phosphate (DK-MTP-1-P). This is Methylthioribulose-1-phosphate dehydratase from Cryptococcus neoformans var. neoformans serotype D (strain B-3501A) (Filobasidiella neoformans).